We begin with the raw amino-acid sequence, 115 residues long: Small nuclear ribonucleoprotein Sm D2 (115 aa).

Positions 30-115 (LSVLQQAVKN…VVLVVRIPSA (86 aa)) constitute a Sm domain.

Belongs to the snRNP core protein family. In terms of assembly, belongs to the 40S cdc5-associated complex (or cwf complex), a spliceosome sub-complex reminiscent of a late-stage spliceosome composed of the U2, U5 and U6 snRNAs and at least brr2, cdc5, cwf2/prp3, cwf3/syf1, cwf4/syf3, cwf5/ecm2, spp42/cwf6, cwf7/spf27, cwf8, cwf9, cwf10, cwf11, cwf12, prp45/cwf13, cwf14, cwf15, cwf16, cwf17, cwf18, cwf19, cwf20, cwf21, cwf22, cwf23, cwf24, cwf25, cwf26, cyp7/cwf27, cwf28, cwf29/ist3, lea1, msl1, prp5/cwf1, prp10, prp12/sap130, prp17, prp22, sap61, sap62, sap114, sap145, slu7, smb1, smd1, smd3, smf1, smg1 and syf2.

Its subcellular location is the nucleus. It is found in the cytoplasm. The protein localises to the cytosol. Functionally, plays a role in pre-mRNA splicing as a core component of the spliceosomal U1, U2, U4 and U5 small nuclear ribonucleoproteins (snRNPs), the building blocks of the spliceosome. This is Small nuclear ribonucleoprotein Sm D2 (smd2) from Schizosaccharomyces pombe (strain 972 / ATCC 24843) (Fission yeast).